A 536-amino-acid chain; its full sequence is Subtilisin-like proteinase Spm1 (536 aa).

The first 15 residues, 1–15 (MKSVILLSLAACAVA), serve as a signal peptide directing secretion. A propeptide spanning residues 16 to 147 (APTAGVETIH…RYEEVKKDEC (132 aa)) is cleaved from the precursor. Positions 44–137 (YIIKFKKHVD…IERDTIVHTM (94 aa)) constitute an Inhibitor I9 domain. Residues 156 to 462 (PWGLSRVSHR…GGCSNYFEIV (307 aa)) form the Peptidase S8 domain. Active-site charge relay system residues include Asp-192 and His-224. N-linked (GlcNAc...) asparagine glycans are attached at residues Asn-254 and Asn-294. Ser-390 functions as the Charge relay system in the catalytic mechanism.

Belongs to the peptidase S8 family.

The protein localises to the vacuole. This chain is Subtilisin-like proteinase Spm1 (SPM1), found in Pyricularia oryzae (strain 70-15 / ATCC MYA-4617 / FGSC 8958) (Rice blast fungus).